Here is a 321-residue protein sequence, read N- to C-terminus: Coproporphyrin III ferrochelatase (321 aa).

Residues His185 and Glu267 each coordinate Fe(2+).

This sequence belongs to the ferrochelatase family.

It is found in the cytoplasm. It carries out the reaction Fe-coproporphyrin III + 2 H(+) = coproporphyrin III + Fe(2+). It functions in the pathway porphyrin-containing compound metabolism; protoheme biosynthesis. Functionally, involved in coproporphyrin-dependent heme b biosynthesis. Catalyzes the insertion of ferrous iron into coproporphyrin III to form Fe-coproporphyrin III. The chain is Coproporphyrin III ferrochelatase from Lacticaseibacillus paracasei (strain ATCC 334 / BCRC 17002 / CCUG 31169 / CIP 107868 / KCTC 3260 / NRRL B-441) (Lactobacillus paracasei).